The chain runs to 82 residues: U7-hexatoxin-Mg1a (82 aa).

Positions 1-26 are cleaved as a signal peptide; it reads MRTIVFLIVSILLLSSAVLMLAEGNA. The propeptide occupies 27-44; that stretch reads ASHELQEYPIEESLEEQR. 4 cysteine pairs are disulfide-bonded: C46–C62, C51–C67, C61–C77, and C69–C75. Arginine amide is present on R80.

This sequence belongs to the rTX family. Expressed by the venom gland.

Its subcellular location is the secreted. Induces flaccid paralysis when injected into lepidopteran larvae. Intracranial injection into mice causes awkwardness of movement and laboured respiration until death. The protein is U7-hexatoxin-Mg1a of Macrothele gigas (Japanese funnel web spider).